Reading from the N-terminus, the 335-residue chain is Adenosine deaminase (335 aa).

Zn(2+)-binding residues include H12 and H14. Substrate-binding residues include H14 and D16. Zn(2+) is bound at residue H197. The active-site Proton donor is the E200. Residue D278 coordinates Zn(2+).

Belongs to the metallo-dependent hydrolases superfamily. Adenosine and AMP deaminases family. Adenosine deaminase subfamily. Zn(2+) is required as a cofactor.

It carries out the reaction adenosine + H2O + H(+) = inosine + NH4(+). The catalysed reaction is 2'-deoxyadenosine + H2O + H(+) = 2'-deoxyinosine + NH4(+). Functionally, catalyzes the hydrolytic deamination of adenosine and 2-deoxyadenosine. This chain is Adenosine deaminase, found in Clostridium botulinum (strain ATCC 19397 / Type A).